Consider the following 264-residue polypeptide: Small ribosomal subunit protein eS1A (264 aa).

A disordered region spans residues 233-264 (GEGGGTGKPAGDETGAKVERADGYEPPVQESV). Over residues 242 to 255 (AGDETGAKVERADG) the composition is skewed to basic and acidic residues.

This sequence belongs to the eukaryotic ribosomal protein eS1 family. In terms of assembly, component of the small ribosomal subunit. Mature ribosomes consist of a small (40S) and a large (60S) subunit. The 40S subunit contains about 33 different proteins and 1 molecule of RNA (18S). The 60S subunit contains about 49 different proteins and 3 molecules of RNA (28S, 5.8S and 5S). Part of the small subunit (SSU) processome, composed of more than 70 proteins and the RNA chaperone small nucleolar RNA (snoRNA) U3.

The protein localises to the cytoplasm. The protein resides in the nucleus. It is found in the nucleolus. Functionally, component of the small ribosomal subunit. The ribosome is a large ribonucleoprotein complex responsible for the synthesis of proteins in the cell. Part of the small subunit (SSU) processome, first precursor of the small eukaryotic ribosomal subunit. During the assembly of the SSU processome in the nucleolus, many ribosome biogenesis factors, an RNA chaperone and ribosomal proteins associate with the nascent pre-rRNA and work in concert to generate RNA folding, modifications, rearrangements and cleavage as well as targeted degradation of pre-ribosomal RNA by the RNA exosome. May play a role during erythropoiesis. This is Small ribosomal subunit protein eS1A (rps3a-a) from Xenopus laevis (African clawed frog).